The chain runs to 278 residues: MVNYKEKLDEAIHLTQQKGFEQTRAEWLMLDVFQWTRTDFVVHMHDDMPKAMIMKFDLALQRMLLGEPIQYIVGFASFYGRTFDVNSNCLIPRPETEEVMLHFLQQLEDDATIVDIGTGSGVLAITLKCEKPDLNVIATDISLEAMNMARNNAEKHQSQIQFLTGDALKPLINEGIKLNGLISNPPYIDEKDMVTMSPTVTRFEPHQALFADNHGYAIYESIIEDLPHVMEKGSPVVFEIGYNQGEALKSIILNKFPDKKIDIIKDINGHDRIVSFKW.

Residues 117 to 121 (GTGSG), Asp140, and Asn184 each bind S-adenosyl-L-methionine. 184–187 (NPPY) contacts substrate.

Belongs to the protein N5-glutamine methyltransferase family. PrmC subfamily.

It catalyses the reaction L-glutaminyl-[peptide chain release factor] + S-adenosyl-L-methionine = N(5)-methyl-L-glutaminyl-[peptide chain release factor] + S-adenosyl-L-homocysteine + H(+). In terms of biological role, methylates the class 1 translation termination release factors RF1/PrfA and RF2/PrfB on the glutamine residue of the universally conserved GGQ motif. In Staphylococcus aureus (strain NCTC 8325 / PS 47), this protein is Release factor glutamine methyltransferase.